Consider the following 252-residue polypeptide: 3-dehydroquinate dehydratase (252 aa).

3-dehydroquinate is bound by residues Ser21, 46 to 48 (EWR), and Arg82. His143 serves as the catalytic Proton donor/acceptor. The Schiff-base intermediate with substrate role is filled by Lys170. 3-dehydroquinate-binding residues include Arg213, Ser232, and Gln236.

This sequence belongs to the type-I 3-dehydroquinase family. In terms of assembly, dimer of dimers.

It catalyses the reaction 3-dehydroquinate = 3-dehydroshikimate + H2O. Its pathway is metabolic intermediate biosynthesis; chorismate biosynthesis; chorismate from D-erythrose 4-phosphate and phosphoenolpyruvate: step 3/7. Inhibited by (2R)-2-methyl-3-dehydroquinic acid. Its function is as follows. Involved in the third step of the chorismate pathway, which leads to the biosynthesis of aromatic amino acids. Catalyzes the cis-dehydration of 3-dehydroquinate (DHQ) and introduces the first double bond of the aromatic ring to yield 3-dehydroshikimate. The reaction involves the formation of an imine intermediate between the keto group of 3-dehydroquinate and the epsilon-amino group of Lys-170 at the active site. This is 3-dehydroquinate dehydratase from Salmonella typhi.